The sequence spans 254 residues: MAAAAADKSTKERLLSTLDDLEVLSRELIEMLALSRSQKLPPPGEDTLILELLIQRDKEFQELMQTALEQGRVHQEMQSLEKEVEKRDSDIQQLQKQLKEAEHILATAVYQAKEKLKSIDKARKGSISSKEIIKYAHRISASNAVCAPLNWVPGDPRRPYPTDLEMRSGMLGNMSNMSTNGVNGHLPGDALAAGRLPDVLTPQYPWQSTDVSMGILPPHHGNDFGLEPPGHNKENEDDVEAMSTDSSSSSSDSD.

A coiled-coil region spans residues 72 to 114 (RVHQEMQSLEKEVEKRDSDIQQLQKQLKEAEHILATAVYQAKE). The segment at 215-254 (ILPPHHGNDFGLEPPGHNKENEDDVEAMSTDSSSSSSDSD) is disordered. Low complexity predominate over residues 243–254 (STDSSSSSSDSD).

It belongs to the Mediator complex subunit 4 family. In terms of assembly, component of the Mediator complex.

The protein resides in the nucleus. Its function is as follows. Component of the Mediator complex, a coactivator involved in the regulated transcription of nearly all RNA polymerase II-dependent genes. Mediator functions as a bridge to convey information from gene-specific regulatory proteins to the basal RNA polymerase II transcription machinery. Mediator is recruited to promoters by direct interactions with regulatory proteins and serves as a scaffold for the assembly of a functional preinitiation complex with RNA polymerase II and the general transcription factors. The sequence is that of Mediator of RNA polymerase II transcription subunit 4 (med4) from Danio rerio (Zebrafish).